The chain runs to 465 residues: Antithrombin-III (465 aa).

Residues 1 to 32 (MISNGIGTVTTGKRSMCLFPLLLIGLWGCVTC) form the signal peptide. Disulfide bonds link Cys41–Cys161 and Cys54–Cys128. Thr64 bears the Phosphothreonine mark. A Phosphoserine modification is found at Ser69. A heparin-binding site is contributed by Trp82. A glycan (N-linked (GlcNAc...) asparagine) is linked at Asn129. Arg162 is a binding site for heparin. Asn168 carries an N-linked (GlcNAc...) asparagine glycan. Position 178 (Arg178) interacts with heparin. N-linked (GlcNAc...) asparagine glycosylation is found at Asn188 and Asn225. Cysteines 280 and 463 form a disulfide.

The protein belongs to the serpin family. Forms protease inhibiting heterodimer with TMPRSS7. Post-translationally, phosphorylated by FAM20C in the extracellular medium. In terms of tissue distribution, plasma.

It localises to the secreted. The protein localises to the extracellular space. Functionally, most important serine protease inhibitor in plasma that regulates the blood coagulation cascade. AT-III inhibits thrombin, matriptase-3/TMPRSS7, as well as factors IXa, Xa and XIa. Its inhibitory activity is greatly enhanced in the presence of heparin. In Ovis aries (Sheep), this protein is Antithrombin-III (SERPINC1).